A 968-amino-acid polypeptide reads, in one-letter code: RNA polymerase-associated protein RapA (968 aa).

In terms of domain architecture, Helicase ATP-binding spans 164–334; the sequence is EVGQRHAPRV…FARLRLLDPD (171 aa). Residue 177–184 participates in ATP binding; the sequence is DEVGLGKT. Positions 280-283 match the DEAH box motif; the sequence is DEAH. A Helicase C-terminal domain is found at 490 to 644; it reads RVEWLLNYLV…TCPTGRTIYD (155 aa).

It belongs to the SNF2/RAD54 helicase family. RapA subfamily. Interacts with the RNAP. Has a higher affinity for the core RNAP than for the holoenzyme. Its ATPase activity is stimulated by binding to RNAP.

Functionally, transcription regulator that activates transcription by stimulating RNA polymerase (RNAP) recycling in case of stress conditions such as supercoiled DNA or high salt concentrations. Probably acts by releasing the RNAP, when it is trapped or immobilized on tightly supercoiled DNA. Does not activate transcription on linear DNA. Probably not involved in DNA repair. This chain is RNA polymerase-associated protein RapA, found in Yersinia pestis bv. Antiqua (strain Antiqua).